The primary structure comprises 521 residues: Cytochrome P450 monooxygenase 105 (521 aa).

Residues 12 to 32 (GVASPATLAVAAVTFLTALVL) form a helical membrane-spanning segment. Residues Asn-218, Asn-274, and Asn-317 are each glycosylated (N-linked (GlcNAc...) asparagine). Residue Cys-449 coordinates heme.

It belongs to the cytochrome P450 family. Heme serves as cofactor.

Its subcellular location is the membrane. The protein operates within secondary metabolite biosynthesis. Cytochrome P450 monooxygenase that is able to use anthracene, carbazole, pyrene, phenanthrene and trans-stilbene as substrates for oxidation. These multifunctional properties against a series of polycyclic aromatic hydrocarbons (PAHs) suggest that CYP105 would play important roles, at least in part, in fungal metabolic systems involved in xenobiotic detoxification. The sequence is that of Cytochrome P450 monooxygenase 105 from Postia placenta (strain ATCC 44394 / Madison 698-R) (Brown rot fungus).